A 133-amino-acid chain; its full sequence is Holo-[acyl-carrier-protein] synthase (133 aa).

Asp8 and Glu57 together coordinate Mg(2+).

Belongs to the P-Pant transferase superfamily. AcpS family. Requires Mg(2+) as cofactor.

Its subcellular location is the cytoplasm. The enzyme catalyses apo-[ACP] + CoA = holo-[ACP] + adenosine 3',5'-bisphosphate + H(+). Its function is as follows. Transfers the 4'-phosphopantetheine moiety from coenzyme A to a Ser of acyl-carrier-protein. The protein is Holo-[acyl-carrier-protein] synthase of Bartonella tribocorum (strain CIP 105476 / IBS 506).